The following is a 308-amino-acid chain: Putative transcription elongation factor S-II (308 aa).

In terms of domain architecture, TFIIS N-terminal spans 5-84 (EETQSLCKQV…KDWKNVVDGK (80 aa)). Residues 82–126 (DGKSKSQDDGGAPPAKKHRKESVEEAKPEKKKIEAPYKRPEPSSR) form a disordered region. A compositionally biased stretch (basic and acidic residues) spans 102-125 (ESVEEAKPEKKKIEAPYKRPEPSS). Residues 148–263 (TRLKSAQLLL…EHQMSVQQGT (116 aa)) form the TFIIS central domain. A TFIIS-type zinc finger spans residues 266–306 (DMFKCGKCGKKNCTYTQLQTRSSDEPMTTFVFCLECGNRWK). The Zn(2+) site is built by C270, C273, C298, and C301.

Belongs to the TFS-II family.

It localises to the nucleus. Necessary for efficient RNA polymerase II transcription elongation past template-encoded arresting sites. The arresting sites in DNA have the property of trapping a certain fraction of elongating RNA polymerases that pass through, resulting in locked ternary complexes. Cleavage of the nascent transcript by S-II allows the resumption of elongation from the new 3'-terminus. The sequence is that of Putative transcription elongation factor S-II from Caenorhabditis elegans.